The chain runs to 258 residues: Putative L-lactate dehydrogenase operon regulatory protein (258 aa).

The 69-residue stretch at arginine 6–arginine 74 folds into the HTH gntR-type domain. A DNA-binding region (H-T-H motif) is located at residues glutamate 34 to alanine 53.

Functionally, may be a regulatory protein for the LCT genes. The chain is Putative L-lactate dehydrogenase operon regulatory protein (lldR) from Escherichia coli (strain K12).